Consider the following 45-residue polypeptide: Putative purine permease 9 (45 aa).

Not detected in seedlings, leaves, embryos or root and shoot meristems.

This Arabidopsis thaliana (Mouse-ear cress) protein is Putative purine permease 9.